The chain runs to 36 residues: uncharacterized protein (36 aa).

The span at 1-14 (MNQLGSGPTKQGVA) shows a compositional bias: polar residues. The interval 1-36 (MNQLGSGPTKQGVATNTGSTGTTKNNSNLSGKGWVL) is disordered. Residues 15–36 (TNTGSTGTTKNNSNLSGKGWVL) show a composition bias toward low complexity.

This is an uncharacterized protein from Dictyostelium discoideum (Social amoeba).